Reading from the N-terminus, the 210-residue chain is Large ribosomal subunit protein bL25 (210 aa).

The segment at 1–23 (MSDIGTLSAKGRDRAGKGAARAT) is disordered.

This sequence belongs to the bacterial ribosomal protein bL25 family. CTC subfamily. Part of the 50S ribosomal subunit; part of the 5S rRNA/L5/L18/L25 subcomplex. Contacts the 5S rRNA. Binds to the 5S rRNA independently of L5 and L18.

Its function is as follows. This is one of the proteins that binds to the 5S RNA in the ribosome where it forms part of the central protuberance. This is Large ribosomal subunit protein bL25 from Rhodospirillum rubrum (strain ATCC 11170 / ATH 1.1.1 / DSM 467 / LMG 4362 / NCIMB 8255 / S1).